Consider the following 451-residue polypeptide: Bifunctional protein GlmU (451 aa).

Residues 1–225 form a pyrophosphorylase region; the sequence is MVVVAILAAG…YQEILGINDR (225 aa). UDP-N-acetyl-alpha-D-glucosamine-binding positions include 7–10, Lys-21, Gln-72, and 77–78; these read LAAG and GT. Residue Asp-102 participates in Mg(2+) binding. Residues Gly-139, Glu-154, Asn-169, and Asn-223 each coordinate UDP-N-acetyl-alpha-D-glucosamine. Asn-223 is a binding site for Mg(2+). Positions 226 to 246 are linker; the sequence is LQLATAYEILQRRVKEQWMMA. Positions 247-451 are N-acetyltransferase; the sequence is GVTLIDPNSI…LGWRRKSGES (205 aa). UDP-N-acetyl-alpha-D-glucosamine is bound by residues Arg-328 and Lys-346. His-358 functions as the Proton acceptor in the catalytic mechanism. UDP-N-acetyl-alpha-D-glucosamine is bound by residues Tyr-361 and Asn-372. Residues Ala-375, 381-382, Ser-400, Ala-418, and Arg-435 each bind acetyl-CoA; that span reads NY.

It in the N-terminal section; belongs to the N-acetylglucosamine-1-phosphate uridyltransferase family. The protein in the C-terminal section; belongs to the transferase hexapeptide repeat family. In terms of assembly, homotrimer. The cofactor is Mg(2+).

The protein localises to the cytoplasm. It catalyses the reaction alpha-D-glucosamine 1-phosphate + acetyl-CoA = N-acetyl-alpha-D-glucosamine 1-phosphate + CoA + H(+). The catalysed reaction is N-acetyl-alpha-D-glucosamine 1-phosphate + UTP + H(+) = UDP-N-acetyl-alpha-D-glucosamine + diphosphate. It participates in nucleotide-sugar biosynthesis; UDP-N-acetyl-alpha-D-glucosamine biosynthesis; N-acetyl-alpha-D-glucosamine 1-phosphate from alpha-D-glucosamine 6-phosphate (route II): step 2/2. The protein operates within nucleotide-sugar biosynthesis; UDP-N-acetyl-alpha-D-glucosamine biosynthesis; UDP-N-acetyl-alpha-D-glucosamine from N-acetyl-alpha-D-glucosamine 1-phosphate: step 1/1. Its pathway is bacterial outer membrane biogenesis; LPS lipid A biosynthesis. Catalyzes the last two sequential reactions in the de novo biosynthetic pathway for UDP-N-acetylglucosamine (UDP-GlcNAc). The C-terminal domain catalyzes the transfer of acetyl group from acetyl coenzyme A to glucosamine-1-phosphate (GlcN-1-P) to produce N-acetylglucosamine-1-phosphate (GlcNAc-1-P), which is converted into UDP-GlcNAc by the transfer of uridine 5-monophosphate (from uridine 5-triphosphate), a reaction catalyzed by the N-terminal domain. The protein is Bifunctional protein GlmU of Nostoc sp. (strain PCC 7120 / SAG 25.82 / UTEX 2576).